The primary structure comprises 484 residues: Probable cytosol aminopeptidase (484 aa).

Positions 256 and 261 each coordinate Mn(2+). Residue lysine 268 is part of the active site. Mn(2+) contacts are provided by aspartate 279, aspartate 338, and glutamate 340. Arginine 342 is a catalytic residue.

It belongs to the peptidase M17 family. It depends on Mn(2+) as a cofactor.

The protein resides in the cytoplasm. The enzyme catalyses Release of an N-terminal amino acid, Xaa-|-Yaa-, in which Xaa is preferably Leu, but may be other amino acids including Pro although not Arg or Lys, and Yaa may be Pro. Amino acid amides and methyl esters are also readily hydrolyzed, but rates on arylamides are exceedingly low.. The catalysed reaction is Release of an N-terminal amino acid, preferentially leucine, but not glutamic or aspartic acids.. In terms of biological role, presumably involved in the processing and regular turnover of intracellular proteins. Catalyzes the removal of unsubstituted N-terminal amino acids from various peptides. The polypeptide is Probable cytosol aminopeptidase (Methylibium petroleiphilum (strain ATCC BAA-1232 / LMG 22953 / PM1)).